Here is a 355-residue protein sequence, read N- to C-terminus: Homeobox protein knotted-1-like LET6 (355 aa).

The tract at residues 75–96 is disordered; it reads PFMDNNNNNNPQEDNNSSSSSI. A compositionally biased stretch (low complexity) spans 79–96; the sequence is NNNNNNPQEDNNSSSSSI. Residues 237 to 257 form the ELK domain; it reads ELKGQLLRKYSGYLGSLKQEF. The homeobox; TALE-type DNA-binding region spans 258–321; sequence MKKRKKGKLP…NQRKRHWKPS (64 aa).

Belongs to the TALE/KNOX homeobox family. As to expression, expressed in developing lateral organs and developing ovaries in flowers.

The protein resides in the nucleus. In terms of biological role, may have a role to play in formative events in ovule and embryo morphogenesis. Probably binds to the DNA sequence 5'-TGAC-3'. This chain is Homeobox protein knotted-1-like LET6 (LET6), found in Solanum lycopersicum (Tomato).